We begin with the raw amino-acid sequence, 264 residues long: Occludin/ELL domain-containing protein 1 (264 aa).

Polar residues predominate over residues 1 to 10; sequence MHNPDGSASP. Residues 1–112 are disordered; it reads MHNPDGSASP…QPGPHKAKTK (112 aa). Pro residues predominate over residues 96-105; it reads PRPPCQPQPG. The OCEL domain maps to 147–257; the sequence is PDYELKYPPV…QIQKFDDQGD (111 aa).

Belongs to the ELL/occludin family.

The sequence is that of Occludin/ELL domain-containing protein 1 (OCEL1) from Homo sapiens (Human).